Consider the following 94-residue polypeptide: Co-chaperonin GroES (94 aa).

The protein belongs to the GroES chaperonin family. Heptamer of 7 subunits arranged in a ring. Interacts with the chaperonin GroEL.

Its subcellular location is the cytoplasm. Functionally, together with the chaperonin GroEL, plays an essential role in assisting protein folding. The GroEL-GroES system forms a nano-cage that allows encapsulation of the non-native substrate proteins and provides a physical environment optimized to promote and accelerate protein folding. GroES binds to the apical surface of the GroEL ring, thereby capping the opening of the GroEL channel. The chain is Co-chaperonin GroES from Geobacillus thermodenitrificans (strain NG80-2).